Reading from the N-terminus, the 1356-residue chain is DNA-directed RNA polymerase subunit beta (1356 aa).

Belongs to the RNA polymerase beta chain family. In terms of assembly, the RNAP catalytic core consists of 2 alpha, 1 beta, 1 beta' and 1 omega subunit. When a sigma factor is associated with the core the holoenzyme is formed, which can initiate transcription.

It carries out the reaction RNA(n) + a ribonucleoside 5'-triphosphate = RNA(n+1) + diphosphate. In terms of biological role, DNA-dependent RNA polymerase catalyzes the transcription of DNA into RNA using the four ribonucleoside triphosphates as substrates. This chain is DNA-directed RNA polymerase subunit beta, found in Stutzerimonas stutzeri (strain A1501) (Pseudomonas stutzeri).